A 342-amino-acid chain; its full sequence is Adenylate isopentenyltransferase 6, chloroplastic (342 aa).

The transit peptide at 1-33 (MQQLMTLLSPPLSHSSLLPTVTTKFGSPRLVTT) directs the protein to the chloroplast. 52–59 (GTTGTGKS) contacts ATP.

Belongs to the IPP transferase family. Expressed in siliques, at the mRNA level.

It localises to the plastid. Its subcellular location is the chloroplast. It catalyses the reaction dimethylallyl diphosphate + ADP = N(6)-(dimethylallyl)adenosine 5'-diphosphate + diphosphate. The enzyme catalyses dimethylallyl diphosphate + ATP = N(6)-(dimethylallyl)adenosine 5'-triphosphate + diphosphate. In terms of biological role, involved in cytokinin biosynthesis. Catalyzes the transfer of an isopentenyl group from dimethylallyl diphosphate (DMAPP) to ATP and ADP. This chain is Adenylate isopentenyltransferase 6, chloroplastic (IPT6), found in Arabidopsis thaliana (Mouse-ear cress).